A 376-amino-acid polypeptide reads, in one-letter code: Succinyl-diaminopimelate desuccinylase (376 aa).

Zn(2+) is bound at residue His66. The active site involves Asp68. Asp99 provides a ligand contact to Zn(2+). Glu133 serves as the catalytic Proton acceptor. Zn(2+)-binding residues include Glu134, Glu162, and His348.

This sequence belongs to the peptidase M20A family. DapE subfamily. In terms of assembly, homodimer. It depends on Zn(2+) as a cofactor. The cofactor is Co(2+).

The enzyme catalyses N-succinyl-(2S,6S)-2,6-diaminopimelate + H2O = (2S,6S)-2,6-diaminopimelate + succinate. Its pathway is amino-acid biosynthesis; L-lysine biosynthesis via DAP pathway; LL-2,6-diaminopimelate from (S)-tetrahydrodipicolinate (succinylase route): step 3/3. Its function is as follows. Catalyzes the hydrolysis of N-succinyl-L,L-diaminopimelic acid (SDAP), forming succinate and LL-2,6-diaminopimelate (DAP), an intermediate involved in the bacterial biosynthesis of lysine and meso-diaminopimelic acid, an essential component of bacterial cell walls. In Xanthomonas oryzae pv. oryzae (strain PXO99A), this protein is Succinyl-diaminopimelate desuccinylase.